The chain runs to 251 residues: Triosephosphate isomerase (251 aa).

Substrate is bound by residues Asn12 and Lys14. His96 functions as the Electrophile in the catalytic mechanism. Glu168 (proton acceptor) is an active-site residue.

This sequence belongs to the triosephosphate isomerase family. As to quaternary structure, homodimer.

The protein localises to the cytoplasm. Its subcellular location is the glycosome. The enzyme catalyses D-glyceraldehyde 3-phosphate = dihydroxyacetone phosphate. It functions in the pathway carbohydrate biosynthesis; gluconeogenesis. The protein operates within carbohydrate degradation; glycolysis; D-glyceraldehyde 3-phosphate from glycerone phosphate: step 1/1. This Leishmania mexicana protein is Triosephosphate isomerase.